The sequence spans 262 residues: Polyamine aminopropyltransferase (262 aa).

Positions 1–249 (MWITQEITPY…DIHRAAFALP (249 aa)) constitute a PABS domain. Residue asparagine 29 coordinates S-methyl-5'-thioadenosine. Aspartate 83 is a spermidine binding site. The active-site Proton acceptor is aspartate 155.

It belongs to the spermidine/spermine synthase family. In terms of assembly, homodimer or homotetramer.

The protein localises to the cytoplasm. It catalyses the reaction S-adenosyl 3-(methylsulfanyl)propylamine + putrescine = S-methyl-5'-thioadenosine + spermidine + H(+). It functions in the pathway amine and polyamine biosynthesis; spermidine biosynthesis; spermidine from putrescine: step 1/1. Its function is as follows. Catalyzes the irreversible transfer of a propylamine group from the amino donor S-adenosylmethioninamine (decarboxy-AdoMet) to putrescine (1,4-diaminobutane) to yield spermidine. This Helicobacter acinonychis (strain Sheeba) protein is Polyamine aminopropyltransferase.